The primary structure comprises 203 residues: ATP-dependent Clp protease proteolytic subunit 2 (203 aa).

Catalysis depends on serine 98, which acts as the Nucleophile. Histidine 123 is an active-site residue.

This sequence belongs to the peptidase S14 family. As to quaternary structure, fourteen ClpP subunits assemble into 2 heptameric rings which stack back to back to give a disk-like structure with a central cavity, resembling the structure of eukaryotic proteasomes.

It is found in the cytoplasm. The catalysed reaction is Hydrolysis of proteins to small peptides in the presence of ATP and magnesium. alpha-casein is the usual test substrate. In the absence of ATP, only oligopeptides shorter than five residues are hydrolyzed (such as succinyl-Leu-Tyr-|-NHMec, and Leu-Tyr-Leu-|-Tyr-Trp, in which cleavage of the -Tyr-|-Leu- and -Tyr-|-Trp bonds also occurs).. Functionally, cleaves peptides in various proteins in a process that requires ATP hydrolysis. Has a chymotrypsin-like activity. Plays a major role in the degradation of misfolded proteins. This is ATP-dependent Clp protease proteolytic subunit 2 from Chlamydia trachomatis serovar A (strain ATCC VR-571B / DSM 19440 / HAR-13).